The following is a 285-amino-acid chain: ATP synthase gamma chain (285 aa).

It belongs to the ATPase gamma chain family. In terms of assembly, F-type ATPases have 2 components, CF(1) - the catalytic core - and CF(0) - the membrane proton channel. CF(1) has five subunits: alpha(3), beta(3), gamma(1), delta(1), epsilon(1). CF(0) has three main subunits: a, b and c.

The protein resides in the cell membrane. Functionally, produces ATP from ADP in the presence of a proton gradient across the membrane. The gamma chain is believed to be important in regulating ATPase activity and the flow of protons through the CF(0) complex. This chain is ATP synthase gamma chain, found in Clostridium novyi (strain NT).